The sequence spans 312 residues: DNA-directed RNA polymerase subunit alpha (312 aa).

The segment at 1-229 is alpha N-terminal domain (alpha-NTD); the sequence is MLQYQIDRIE…ELFQPLATVT (229 aa). Positions 239 to 312 are alpha C-terminal domain (alpha-CTD); sequence EPSAEAQIPL…ISIPQSRTSA (74 aa).

This sequence belongs to the RNA polymerase alpha chain family. In terms of assembly, in cyanobacteria the RNAP catalytic core is composed of 2 alpha, 1 beta, 1 beta', 1 gamma and 1 omega subunit. When a sigma factor is associated with the core the holoenzyme is formed, which can initiate transcription.

It carries out the reaction RNA(n) + a ribonucleoside 5'-triphosphate = RNA(n+1) + diphosphate. DNA-dependent RNA polymerase catalyzes the transcription of DNA into RNA using the four ribonucleoside triphosphates as substrates. The chain is DNA-directed RNA polymerase subunit alpha from Synechococcus sp. (strain CC9605).